A 249-amino-acid chain; its full sequence is Deoxyribose-phosphate aldolase (249 aa).

The active-site Proton donor/acceptor is the aspartate 94. Lysine 158 acts as the Schiff-base intermediate with acetaldehyde in catalysis. Lysine 200 acts as the Proton donor/acceptor in catalysis.

The protein belongs to the DeoC/FbaB aldolase family. DeoC type 1 subfamily.

The protein localises to the cytoplasm. It catalyses the reaction 2-deoxy-D-ribose 5-phosphate = D-glyceraldehyde 3-phosphate + acetaldehyde. It functions in the pathway carbohydrate degradation; 2-deoxy-D-ribose 1-phosphate degradation; D-glyceraldehyde 3-phosphate and acetaldehyde from 2-deoxy-alpha-D-ribose 1-phosphate: step 2/2. In terms of biological role, catalyzes a reversible aldol reaction between acetaldehyde and D-glyceraldehyde 3-phosphate to generate 2-deoxy-D-ribose 5-phosphate. This chain is Deoxyribose-phosphate aldolase, found in Thermoplasma volcanium (strain ATCC 51530 / DSM 4299 / JCM 9571 / NBRC 15438 / GSS1).